The following is a 155-amino-acid chain: Transcription antitermination protein NusB (155 aa).

It belongs to the NusB family.

Involved in transcription antitermination. Required for transcription of ribosomal RNA (rRNA) genes. Binds specifically to the boxA antiterminator sequence of the ribosomal RNA (rrn) operons. The protein is Transcription antitermination protein NusB of Ralstonia nicotianae (strain ATCC BAA-1114 / GMI1000) (Ralstonia solanacearum).